The primary structure comprises 441 residues: Glutamate-1-semialdehyde 2,1-aminomutase (441 aa).

Position 273 is an N6-(pyridoxal phosphate)lysine (Lys273).

This sequence belongs to the class-III pyridoxal-phosphate-dependent aminotransferase family. HemL subfamily. Pyridoxal 5'-phosphate serves as cofactor.

Its subcellular location is the cytoplasm. It carries out the reaction (S)-4-amino-5-oxopentanoate = 5-aminolevulinate. Its pathway is porphyrin-containing compound metabolism; protoporphyrin-IX biosynthesis; 5-aminolevulinate from L-glutamyl-tRNA(Glu): step 2/2. The protein is Glutamate-1-semialdehyde 2,1-aminomutase of Pyrobaculum calidifontis (strain DSM 21063 / JCM 11548 / VA1).